Reading from the N-terminus, the 414-residue chain is MQPRRPDRFDGLEYRGTSWGRGDGDVPPYQSSFPARSLSSSGDLSQQWVTSPPDIPGSRNLHWGEKSPQYGADSNAGPPAFGEENSGSSGEQVNRFAGFGIGLASLFTENVLAHPCIVLRRQCQVNYHAQNYQLSPFSIVNIMYNFTKTQGPRALWKGMGSTFIVQGISLGAEGMLSEFTHLPRELSHKWNLKQLGGHLLLKGLVYVIVTPFYSASLIETVQSEIIHDNPGILDCLKEGIGRVLNLGVPYSKRLLPLLVLTFPTVLHGILHYIISSTIQKCVLFFIKKRSPPQLPAEGSNAVQNKLEDYFPELLANFAASLCADVLLYPLETVMHRLHIQGTRTIIDNTDLGHEVVPINTQYEGLKDCINTIKREEGGLGFYKGFGAVVVQYTLHAIVLQITKIIYSSVVQTAR.

A compositionally biased stretch (basic and acidic residues) spans 1 to 13; that stretch reads MQPRRPDRFDGLE. The tract at residues 1-89 is disordered; the sequence is MQPRRPDRFD…AFGEENSGSS (89 aa). Over residues 29–50 the composition is skewed to polar residues; that stretch reads YQSSFPARSLSSSGDLSQQWVT. Residues 92 to 183 form a Solcar 1 repeat; it reads QVNRFAGFGI…GMLSEFTHLP (92 aa). Helical transmembrane passes span 99 to 119, 159 to 179, 198 to 218, 254 to 274, 310 to 330, and 379 to 399; these read FGIGLASLFTENVLAHPCIVL, MGSTFIVQGISLGAEGMLSEF, HLLLKGLVYVIVTPFYSASLI, LLPLLVLTFPTVLHGILHYII, FPELLANFAASLCADVLLYPL, and LGFYKGFGAVVVQYTLHAIVL. The Solcar 2 repeat unit spans residues 307–412; that stretch reads EDYFPELLAN…KIIYSSVVQT (106 aa).

The protein belongs to the mitochondrial carrier (TC 2.A.29) family.

It localises to the mitochondrion outer membrane. In terms of biological role, may play a role in mitochondrial dynamics by controlling mitochondrial membrane fission. The sequence is that of Solute carrier family 25 member 46-B (slc25a46-b) from Xenopus laevis (African clawed frog).